A 156-amino-acid polypeptide reads, in one-letter code: ATP synthase subunit b (156 aa).

Residues Leu-7 to Leu-29 form a helical membrane-spanning segment.

This sequence belongs to the ATPase B chain family. F-type ATPases have 2 components, F(1) - the catalytic core - and F(0) - the membrane proton channel. F(1) has five subunits: alpha(3), beta(3), gamma(1), delta(1), epsilon(1). F(0) has three main subunits: a(1), b(2) and c(10-14). The alpha and beta chains form an alternating ring which encloses part of the gamma chain. F(1) is attached to F(0) by a central stalk formed by the gamma and epsilon chains, while a peripheral stalk is formed by the delta and b chains.

The protein localises to the cell inner membrane. F(1)F(0) ATP synthase produces ATP from ADP in the presence of a proton or sodium gradient. F-type ATPases consist of two structural domains, F(1) containing the extramembraneous catalytic core and F(0) containing the membrane proton channel, linked together by a central stalk and a peripheral stalk. During catalysis, ATP synthesis in the catalytic domain of F(1) is coupled via a rotary mechanism of the central stalk subunits to proton translocation. In terms of biological role, component of the F(0) channel, it forms part of the peripheral stalk, linking F(1) to F(0). The chain is ATP synthase subunit b from Burkholderia ambifaria (strain MC40-6).